The sequence spans 523 residues: Calcium uptake protein 3, mitochondrial (523 aa).

Residues 1 to 6 constitute a mitochondrion transit peptide; the sequence is MAALRR. The EF-hand 1 domain occupies 226–261; that stretch reads PHAGFRIAFNMFDTDGNEMVDKKEFLVLQEIFRKKN. Positions 238, 240, 242, 244, 246, and 249 each coordinate Ca(2+). The 36-residue stretch at 395–430 folds into the EF-hand 2; degenerate domain; sequence ENTSVFLENVRYSISEEKGITFDEFRSFFQFLNNLE. The EF-hand 3 domain occupies 464–499; sequence SPHLVNTVFKIFDVDKDDQLSYKEFIGIMKDRLHRG. Positions 476, 478, 480, 482, and 487 each coordinate Ca(2+).

The protein belongs to the MICU1 family. MICU3 subfamily. Heterodimer; disulfide-linked; heterodimerizes with MICU1. Heterodimerizes with isoform 3 of MICU1 (MICU1.1) in skeletal muscle. Component of the uniplex complex, composed of MCU, EMRE/SMDT1, MICU1 and MICU3 in a 4:4:1:1 stoichiometry. Predominantly expressed in skeletal muscle and central nervous system.

It localises to the mitochondrion intermembrane space. It is found in the mitochondrion inner membrane. Functionally, tissue-specific calcium sensor of the mitochondrial calcium uniporter (MCU) channel, which specifically regulates MCU channel activity in the central nervous system and skeletal muscle. Senses calcium level via its EF-hand domains: compared to MICU1 and MICU2, MICU3 has a higher affinity for calcium. MICU1 and MICU3 form a disulfide-linked heterodimer that stimulates and inhibits MCU activity, depending on the concentration of calcium. At low calcium levels, MICU1 occludes the pore of the MCU channel, preventing mitochondrial calcium uptake. At higher calcium levels, calcium-binding to MICU1 and MICU3 induces a conformational change that weakens MCU-MICU1 interactions and moves the MICU1-MICU3 heterodimer away from the pore, allowing calcium permeation through the MCU channel. The high calcium affinity of MICU3 lowers the calcium threshold necessary for calcium permeation through the MCU channel. The MICU1-MICU3 heterodimer promotes flexibility of neurotransmission in neuronal cells by enhancing mitochondrial calcium uptake in presynapses. It is also required to increase mitochondrial calcium uptake in skeletal muscle cells, thereby increasing ATP production. This Mus musculus (Mouse) protein is Calcium uptake protein 3, mitochondrial.